The primary structure comprises 525 residues: Putative ribose/galactose/methyl galactoside import ATP-binding protein (525 aa).

The segment at 1–30 (MFGSATANPPAQRDLPSSDSDSPTPDAQPP) is disordered. Residues 14 to 25 (DLPSSDSDSPTP) are compositionally biased toward low complexity. ABC transporter domains follow at residues 33–269 (LEIS…VGRE) and 279–523 (KPPG…SGHK). 65-72 (GENGAGKS) is a binding site for ATP.

The protein belongs to the ABC transporter superfamily. Carbohydrate importer 2 (CUT2) (TC 3.A.1.2) family.

The protein resides in the cell inner membrane. It carries out the reaction D-ribose(out) + ATP + H2O = D-ribose(in) + ADP + phosphate + H(+). The enzyme catalyses D-galactose(out) + ATP + H2O = D-galactose(in) + ADP + phosphate + H(+). Part of an ABC transporter complex involved in carbohydrate import. Could be involved in ribose, galactose and/or methyl galactoside import. Responsible for energy coupling to the transport system. This chain is Putative ribose/galactose/methyl galactoside import ATP-binding protein, found in Pseudomonas savastanoi pv. phaseolicola (strain 1448A / Race 6) (Pseudomonas syringae pv. phaseolicola (strain 1448A / Race 6)).